The sequence spans 288 residues: Polyamine aminopropyltransferase (288 aa).

In terms of domain architecture, PABS spans 9-238 (ETLHDQFGQY…GIMTFAWATD (230 aa)). Position 33 (Gln33) interacts with S-methyl-5'-thioadenosine. Spermidine contacts are provided by His64 and Asp88. S-methyl-5'-thioadenosine contacts are provided by residues Glu108 and 140 to 141 (DG). Catalysis depends on Asp158, which acts as the Proton acceptor. 158–161 (DCTD) is a spermidine binding site. Pro165 provides a ligand contact to S-methyl-5'-thioadenosine.

The protein belongs to the spermidine/spermine synthase family. In terms of assembly, homodimer or homotetramer.

It localises to the cytoplasm. It carries out the reaction S-adenosyl 3-(methylsulfanyl)propylamine + putrescine = S-methyl-5'-thioadenosine + spermidine + H(+). The protein operates within amine and polyamine biosynthesis; spermidine biosynthesis; spermidine from putrescine: step 1/1. Catalyzes the irreversible transfer of a propylamine group from the amino donor S-adenosylmethioninamine (decarboxy-AdoMet) to putrescine (1,4-diaminobutane) to yield spermidine. This chain is Polyamine aminopropyltransferase, found in Shigella flexneri serotype 5b (strain 8401).